A 281-amino-acid polypeptide reads, in one-letter code: Auxin-responsive protein IAA10 (281 aa).

2 disordered regions span residues 1–115 and 130–157; these read MRGG…VVGW and AKEN…EEGE. A compositionally biased stretch (low complexity) spans 7 to 17; sequence GPTAGEPPGTE. Positions 18–35 are enriched in acidic residues; the sequence is AEAEEVEESSAGDDEELE. The EAR-like (transcriptional repression) signature appears at 36–40; sequence LGLSL. Low complexity-rich tracts occupy residues 36–49 and 63–84; these read LGLS…QQQQ and PAAA…AAAA. Positions 133–157 are enriched in basic and acidic residues; it reads NTSETDTKKTATNESDVQKDKEEGE. Positions 163–259 constitute a PB1 domain; the sequence is AGWVKVNMDG…KRLRIMRTSD (97 aa).

It belongs to the Aux/IAA family. As to quaternary structure, homodimers and heterodimers. As to expression, highly expressed in flowers. Expressed in shoots.

It is found in the nucleus. In terms of biological role, aux/IAA proteins are short-lived transcriptional factors that function as repressors of early auxin response genes at low auxin concentrations. This is Auxin-responsive protein IAA10 (IAA10) from Oryza sativa subsp. indica (Rice).